The primary structure comprises 208 residues: Large ribosomal subunit protein uL3 (208 aa).

A disordered region spans residues 117 to 149 (FQGVIKRHGQSRGPMAHGSRYHRRPGSMGPVSP).

The protein belongs to the universal ribosomal protein uL3 family. As to quaternary structure, part of the 50S ribosomal subunit. Forms a cluster with proteins L14 and L19.

In terms of biological role, one of the primary rRNA binding proteins, it binds directly near the 3'-end of the 23S rRNA, where it nucleates assembly of the 50S subunit. In Streptococcus equi subsp. equi (strain 4047), this protein is Large ribosomal subunit protein uL3.